The following is a 535-amino-acid chain: Flavin-containing monooxygenase 1 (535 aa).

Ala-2 bears the N-acetylalanine mark. The Lumenal portion of the chain corresponds to 2–513 (AKRVAIVGAG…TRIVQESSSP (512 aa)). FAD contacts are provided by residues 9–13 (GAGVS), Glu-32, 40–41 (LW), and 61–62 (NS). Residues 60–61 (SN) and 195–198 (SGTD) each bind NADP(+). Residues 514–534 (FESLLKLFAVLALLVSVFLIF) form a helical membrane-spanning segment. Leu-535 is a topological domain (cytoplasmic).

Belongs to the FMO family. The cofactor is FAD. Liver.

The protein resides in the endoplasmic reticulum membrane. It catalyses the reaction hypotaurine + NADPH + O2 + H(+) = taurine + NADP(+) + H2O. It carries out the reaction hypotaurine + NADH + O2 + H(+) = taurine + NAD(+) + H2O. The catalysed reaction is trimethylamine + NADPH + O2 = trimethylamine N-oxide + NADP(+) + H2O. The enzyme catalyses N,N-dimethylaniline + NADPH + O2 + H(+) = N,N-dimethylaniline N-oxide + NADP(+) + H2O. In terms of biological role, broad spectrum monooxygenase that catalyzes the oxygenation of a wide variety of nitrogen- and sulfur-containing compounds including xenobiotics. Catalyzes the S-oxygenation of hypotaurine to produce taurine, an organic osmolyte involved in cell volume regulation as well as a variety of cytoprotective and developmental processes. In vitro, catalyzes the N-oxygenation of trimethylamine (TMA) to produce trimethylamine N-oxide (TMAO) and could therefore participate to the detoxification of this compound that is generated by the action of gut microbiota from dietary precursors such as choline, choline containing compounds, betaine or L-carnitine. The sequence is that of Flavin-containing monooxygenase 1 (FMO1) from Oryctolagus cuniculus (Rabbit).